The following is a 382-amino-acid chain: Carbamoyl phosphate synthase small chain (382 aa).

Residues methionine 1–glutamate 189 are CPSase. 3 residues coordinate L-glutamine: serine 47, glycine 241, and glycine 243. The region spanning histidine 193 to serine 380 is the Glutamine amidotransferase type-1 domain. The active-site Nucleophile is the cysteine 269. The L-glutamine site is built by leucine 270, glutamine 273, asparagine 311, glycine 313, and phenylalanine 314. Active-site residues include histidine 353 and glutamate 355.

Belongs to the CarA family. Composed of two chains; the small (or glutamine) chain promotes the hydrolysis of glutamine to ammonia, which is used by the large (or ammonia) chain to synthesize carbamoyl phosphate. Tetramer of heterodimers (alpha,beta)4.

It catalyses the reaction hydrogencarbonate + L-glutamine + 2 ATP + H2O = carbamoyl phosphate + L-glutamate + 2 ADP + phosphate + 2 H(+). It carries out the reaction L-glutamine + H2O = L-glutamate + NH4(+). It functions in the pathway amino-acid biosynthesis; L-arginine biosynthesis; carbamoyl phosphate from bicarbonate: step 1/1. Its pathway is pyrimidine metabolism; UMP biosynthesis via de novo pathway; (S)-dihydroorotate from bicarbonate: step 1/3. Its function is as follows. Small subunit of the glutamine-dependent carbamoyl phosphate synthetase (CPSase). CPSase catalyzes the formation of carbamoyl phosphate from the ammonia moiety of glutamine, carbonate, and phosphate donated by ATP, constituting the first step of 2 biosynthetic pathways, one leading to arginine and/or urea and the other to pyrimidine nucleotides. The small subunit (glutamine amidotransferase) binds and cleaves glutamine to supply the large subunit with the substrate ammonia. This Pectobacterium atrosepticum (strain SCRI 1043 / ATCC BAA-672) (Erwinia carotovora subsp. atroseptica) protein is Carbamoyl phosphate synthase small chain.